A 205-amino-acid chain; its full sequence is Outer-membrane lipoprotein carrier protein (205 aa).

The N-terminal stretch at 1-19 is a signal peptide; that stretch reads MKKIIICFIFVFSINVSFA.

The protein belongs to the LolA family. As to quaternary structure, monomer.

Its subcellular location is the periplasm. In terms of biological role, participates in the translocation of lipoproteins from the inner membrane to the outer membrane. Only forms a complex with a lipoprotein if the residue after the N-terminal Cys is not an aspartate (The Asp acts as a targeting signal to indicate that the lipoprotein should stay in the inner membrane). In Francisella tularensis subsp. holarctica (strain LVS), this protein is Outer-membrane lipoprotein carrier protein.